The chain runs to 173 residues: Ribosome maturation factor RimM (173 aa).

A PRC barrel domain is found at 98 to 171 (DDQYYYDEII…LITIDALEGL (74 aa)).

The protein belongs to the RimM family. As to quaternary structure, binds ribosomal protein uS19.

Its subcellular location is the cytoplasm. Its function is as follows. An accessory protein needed during the final step in the assembly of 30S ribosomal subunit, possibly for assembly of the head region. Essential for efficient processing of 16S rRNA. May be needed both before and after RbfA during the maturation of 16S rRNA. It has affinity for free ribosomal 30S subunits but not for 70S ribosomes. The polypeptide is Ribosome maturation factor RimM (Leuconostoc mesenteroides subsp. mesenteroides (strain ATCC 8293 / DSM 20343 / BCRC 11652 / CCM 1803 / JCM 6124 / NCDO 523 / NBRC 100496 / NCIMB 8023 / NCTC 12954 / NRRL B-1118 / 37Y)).